The primary structure comprises 137 residues: Gonadotropin subunit beta-1 (137 aa).

The signal sequence occupies residues 1-24 (MYCTHLRMLQLVVMATLWVTPVRA). Cystine bridges form between Cys32–Cys78, Cys46–Cys93, Cys55–Cys108, Cys59–Cys110, and Cys113–Cys120. The N-linked (GlcNAc...) asparagine glycan is linked to Asn36.

Belongs to the glycoprotein hormones subunit beta family. As to quaternary structure, heterodimer of an alpha and a beta chain.

It is found in the secreted. Involved in gametogenesis and steroidogenesis. The sequence is that of Gonadotropin subunit beta-1 (cgba) from Coregonus autumnalis (Arctic cisco).